A 387-amino-acid chain; its full sequence is 3-ketoacyl-CoA thiolase (387 aa).

Cys91 acts as the Acyl-thioester intermediate in catalysis. Catalysis depends on proton acceptor residues His343 and Cys373.

Belongs to the thiolase-like superfamily. Thiolase family. Heterotetramer of two alpha chains (FadB) and two beta chains (FadA).

It localises to the cytoplasm. The catalysed reaction is an acyl-CoA + acetyl-CoA = a 3-oxoacyl-CoA + CoA. It participates in lipid metabolism; fatty acid beta-oxidation. Catalyzes the final step of fatty acid oxidation in which acetyl-CoA is released and the CoA ester of a fatty acid two carbons shorter is formed. This Photobacterium profundum (strain SS9) protein is 3-ketoacyl-CoA thiolase.